The following is an 82-amino-acid chain: Small ribosomal subunit protein uS17 (82 aa).

The protein belongs to the universal ribosomal protein uS17 family. In terms of assembly, part of the 30S ribosomal subunit.

Functionally, one of the primary rRNA binding proteins, it binds specifically to the 5'-end of 16S ribosomal RNA. In Bradyrhizobium sp. (strain BTAi1 / ATCC BAA-1182), this protein is Small ribosomal subunit protein uS17.